A 68-amino-acid polypeptide reads, in one-letter code: Copper transport protein ATOX1 (68 aa).

One can recognise an HMA domain in the interval 1–63 (MPKHEFSVDM…TLKKTGKTVS (63 aa)). Positions 12 and 15 each coordinate Cu cation. The residue at position 47 (serine 47) is a Phosphoserine. At lysine 60 the chain carries N6-acetyllysine.

The protein belongs to the ATX1 family. Homodimer. Interacts with ATP7B. Interacts with ATP7A. Interacts (via dimer form) with SLC31A1 (via C-terminal domain); this interaction improves ATOX1 stability and controls intracellular Cu(I) levels. Ubiquitous.

In terms of biological role, binds and deliver cytosolic copper to the copper ATPase proteins. May be important in cellular antioxidant defense. The sequence is that of Copper transport protein ATOX1 from Homo sapiens (Human).